A 41-amino-acid polypeptide reads, in one-letter code: Fibrinogen beta chain (41 aa).

Residues 1–41 (ADDYDDEVLPDARGHRPIDRKREELPSLRPAPPPISGGGYR) form a disordered region. The residue at position 4 (Tyr4) is a Sulfotyrosine. Residues 10–26 (PDARGHRPIDRKREELP) show a composition bias toward basic and acidic residues. The segment at 14 to 16 (GHR) is beta-chain polymerization, binding distal domain of another fibrin.

As to quaternary structure, heterohexamer; disulfide linked. Contains 2 sets of 3 non-identical chains (alpha, beta and gamma). The 2 heterotrimers are in head to head conformation with the N-termini in a small central domain. Conversion of fibrinogen to fibrin is triggered by thrombin, which cleaves fibrinopeptides A and B from alpha and beta chains, and thus exposes the N-terminal polymerization sites responsible for the formation of the soft clot.

It is found in the secreted. In terms of biological role, cleaved by the protease thrombin to yield monomers which, together with fibrinogen alpha (FGA) and fibrinogen gamma (FGG), polymerize to form an insoluble fibrin matrix. Fibrin has a major function in hemostasis as one of the primary components of blood clots. In addition, functions during the early stages of wound repair to stabilize the lesion and guide cell migration during re-epithelialization. Was originally thought to be essential for platelet aggregation, based on in vitro studies using anticoagulated blood. However subsequent studies have shown that it is not absolutely required for thrombus formation in vivo. Enhances expression of SELP in activated platelets. Maternal fibrinogen is essential for successful pregnancy. Fibrin deposition is also associated with infection, where it protects against IFNG-mediated hemorrhage. May also facilitate the antibacterial immune response via both innate and T-cell mediated pathways. In Oryctolagus cuniculus (Rabbit), this protein is Fibrinogen beta chain (FGB).